Consider the following 341-residue polypeptide: L-threonine 3-dehydrogenase (341 aa).

Cys-38 serves as a coordination point for Zn(2+). Active-site charge relay system residues include Thr-40 and His-43. Zn(2+) contacts are provided by His-63, Glu-64, Cys-93, Cys-96, Cys-99, and Cys-107. Residues Ile-175, Asp-195, Arg-200, 262–264, and 286–287 contribute to the NAD(+) site; these read LGI and IY.

It belongs to the zinc-containing alcohol dehydrogenase family. In terms of assembly, homotetramer. Requires Zn(2+) as cofactor.

The protein resides in the cytoplasm. The catalysed reaction is L-threonine + NAD(+) = (2S)-2-amino-3-oxobutanoate + NADH + H(+). It functions in the pathway amino-acid degradation; L-threonine degradation via oxydo-reductase pathway; glycine from L-threonine: step 1/2. Catalyzes the NAD(+)-dependent oxidation of L-threonine to 2-amino-3-ketobutyrate. This chain is L-threonine 3-dehydrogenase, found in Shewanella frigidimarina (strain NCIMB 400).